A 484-amino-acid chain; its full sequence is Trigger factor (484 aa).

The region spanning 165–244 (GDFVQIDLTA…VQSVKERELP (80 aa)) is the PPIase FKBP-type domain. The segment at 429–484 (DAVSEEPADADAEAVVADAPAEEAAEAPAAEEAPAEKPKKKAPAKKKASEKAADSE) is disordered. Residues 430 to 440 (AVSEEPADADA) are compositionally biased toward acidic residues. Basic and acidic residues predominate over residues 475–484 (KASEKAADSE).

This sequence belongs to the FKBP-type PPIase family. Tig subfamily.

The protein resides in the cytoplasm. The catalysed reaction is [protein]-peptidylproline (omega=180) = [protein]-peptidylproline (omega=0). Involved in protein export. Acts as a chaperone by maintaining the newly synthesized protein in an open conformation. Functions as a peptidyl-prolyl cis-trans isomerase. This chain is Trigger factor, found in Clavibacter michiganensis subsp. michiganensis (strain NCPPB 382).